We begin with the raw amino-acid sequence, 82 residues long: Cytochrome c-551 (82 aa).

Cys-12, Cys-15, His-16, and Met-61 together coordinate heme c.

Post-translationally, binds 1 heme c group covalently per subunit.

Its function is as follows. This is a prokaryotic monoheme cytochrome, unreactive with mitochondrial cytochrome C oxidase or reductase. It functions in nitrite and nitrate respiration in Pseudomonas, but it is also found in other bacteria. This Ectopseudomonas mendocina (Pseudomonas mendocina) protein is Cytochrome c-551.